A 360-amino-acid polypeptide reads, in one-letter code: Protein Wnt-2 (360 aa).

Residues 1–25 (MNAPLGGIWLWLPLLLTWLTPEVNS) form the signal peptide. Intrachain disulfides connect C76–C87, C127–C135, C137–C157, C206–C220, C208–C215, C278–C309, C294–C304, C308–C348, C324–C339, C326–C336, and C331–C332. S212 carries O-palmitoleoyl serine; by PORCN lipidation. An N-linked (GlcNAc...) asparagine glycan is attached at N295.

It belongs to the Wnt family. In terms of processing, palmitoleoylation is required for efficient binding to frizzled receptors. Depalmitoleoylation leads to Wnt signaling pathway inhibition. Expressed in brain in the thalamus, in fetal and adult lung and in placenta.

Its subcellular location is the secreted. It localises to the extracellular space. The protein localises to the extracellular matrix. Its function is as follows. Ligand for members of the frizzled family of seven transmembrane receptors. Functions in the canonical Wnt signaling pathway that results in activation of transcription factors of the TCF/LEF family. Functions as a upstream regulator of FGF10 expression. Plays an important role in embryonic lung development. May contribute to embryonic brain development by regulating the proliferation of dopaminergic precursors and neurons. This is Protein Wnt-2 (WNT2) from Homo sapiens (Human).